The following is a 230-amino-acid chain: Ribonuclease 3 (230 aa).

Residues 5–134 (EALLENSFNI…FLGALLLDKG (130 aa)) form the RNase III domain. Mg(2+) is bound at residue Glu-47. Asp-51 is an active-site residue. The Mg(2+) site is built by Asp-120 and Glu-123. Glu-123 is an active-site residue. The DRBM domain maps to 160-229 (DYKTCLQELL…AKNALAQLSE (70 aa)).

It belongs to the ribonuclease III family. In terms of assembly, homodimer. The cofactor is Mg(2+).

Its subcellular location is the cytoplasm. It catalyses the reaction Endonucleolytic cleavage to 5'-phosphomonoester.. Digests double-stranded RNA. Involved in the processing of primary rRNA transcript to yield the immediate precursors to the large and small rRNAs (23S and 16S). Processes some mRNAs, and tRNAs when they are encoded in the rRNA operon. Processes pre-crRNA and tracrRNA of type II CRISPR loci if present in the organism. In Streptococcus equi subsp. zooepidemicus (strain H70), this protein is Ribonuclease 3.